The sequence spans 135 residues: RxLR effector protein PITG_02860 (135 aa).

Residues 1-18 form the signal peptide; that stretch reads MRLAFLLLAVSHFICGNA. The short motif at 48-64 is the RxLR-dEER element; sequence RKLLRTDERLSEANEER. Residues 126 to 135 form an NRL1-binding domain region; sequence LKDPQAFRGP.

It belongs to the RxLR effector family. As to quaternary structure, interacts with host ubiquitin E3 ligase NRL1.

It is found in the secreted. The protein resides in the host cytoplasm. The protein localises to the host nucleus. Its subcellular location is the host nucleoplasm. Effector that promotes P.infestans virulence and suppresses pattern-triggered immunity (PTI). Interacts with the host ubiquitin E3 ligase NRL1 and enhances the association between NRL1 and SWAP70 to promote proteasome-mediated degradation of SWAP70, which results in the suppression of immunity. The protein is RxLR effector protein PITG_02860 of Phytophthora infestans (strain T30-4) (Potato late blight agent).